The primary structure comprises 139 residues: Hydrogenase maturation factor HypA (139 aa).

Ni(2+) is bound at residue histidine 2. Cysteine 73, cysteine 76, cysteine 110, and cysteine 113 together coordinate Zn(2+).

This sequence belongs to the HypA/HybF family.

Its function is as follows. Involved in the maturation of [NiFe] hydrogenases. Required for nickel insertion into the metal center of the hydrogenase. This is Hydrogenase maturation factor HypA from Pyrococcus abyssi (strain GE5 / Orsay).